A 338-amino-acid polypeptide reads, in one-letter code: MFQAFPGDYDSGSRCSSSPSAESQYLSSVDSFGSPPTAAASQECAGLGEMPGSFVPTVTAITTSQDLQWLVQPTLISSMAQSQGQPLASQPPVVDPYDMPGTSYSTPGMSGYSSGGASGSGGPSTSGTTSGPGPARPARARPRRPREETLTPEEEEKRRVRRERNKLAAAKCRNRRRELTDRLQAETDQLEEEKAELESEIAELQKEKERLEFVLVAHKPGCKIPYEEGPGPGPLAEVRDLPGSAPAKEDGFSWLLPPPPPPPLPFQTSQDAPPNLTASLFTHSEVQVLGDPFPVVNPSYTSSFVLTCPEVSAFAGAQRTSGSDQPSDPLNSPSLLAL.

Disordered stretches follow at residues 1-54 (MFQA…PGSF), 79-191 (MAQS…DQLE), 222-276 (CKIP…PPNL), and 316-338 (GAQR…LLAL). 2 stretches are compositionally biased toward polar residues: residues 13–31 (SRCS…SVDS) and 79–88 (MAQSQGQPLA). Ser27 bears the Phosphoserine mark. Residues 113-124 (SSGGASGSGGPS) are compositionally biased toward gly residues. Over residues 125–137 (TSGTTSGPGPARP) the composition is skewed to low complexity. One can recognise a bZIP domain in the interval 155-218 (EEKRRVRRER…ERLEFVLVAH (64 aa)). The tract at residues 157 to 182 (KRRVRRERNKLAAAKCRNRRRELTDR) is basic motif. The tract at residues 183–211 (LQAETDQLEEEKAELESEIAELQKEKERL) is leucine-zipper. A compositionally biased stretch (pro residues) spans 256-265 (LPPPPPPPLP). Composition is skewed to polar residues over residues 266 to 276 (FQTSQDAPPNL) and 318 to 338 (QRTS…LLAL).

It belongs to the bZIP family. Fos subfamily. Heterodimer; binds to DNA as heterodimer. Component of an AP-1 transcription factor complex; composed of FOS-JUN heterodimers. As part of the AP-1 transcription factor complex, forms heterodimers with JUN, JUNB or JUND, thereby binding to the AP-1 consensus sequence and stimulating transcription. Interacts with the BAF multiprotein chromatin-remodeling complex subunits SMARCB1 and SMARCD1. Interacts with ARID1A and JUN. In terms of assembly, homodimer under oxidizing conditions and monomer under reducing conditions (in vitro). Heterodimer; binds to DNA as heterodimer. Forms heterodimers with JUNB, JUN or JUND; thereby binding to the AP-1 consensus sequence but does not stimulate transcription. Forms heterodimers with JUND under oxidizing conditions. Phosphorylated. Post-translationally, phosphorylated at Ser-27 by CSNK2A1; phosphorylation increases protein stability and transactivation potential. Expressed in the nucleus accumbens of the striatum (at protein level).

The protein localises to the nucleus. Heterodimerizes with proteins of the JUN family to form an AP-1 transcription factor complex, thereby enhancing their DNA binding activity to gene promoters containing an AP-1 consensus sequence 5'-TGA[GC]TCA-3' and enhancing their transcriptional activity. As part of the AP-1 complex, facilitates enhancer selection together with cell-type-specific transcription factors by collaboratively binding to nucleosomal enhancers and recruiting the SWI/SNF (BAF) chromatin remodeling complex to establish accessible chromatin. Together with JUN, plays a role in activation-induced cell death of T cells by binding to the AP-1 promoter site of FASLG/CD95L, and inducing its transcription in response to activation of the TCR/CD3 signaling pathway. Exhibits transactivation activity in vitro. Involved in the display of nurturing behavior towards newborns. May play a role in neurogenesis in the hippocampus and in learning and memory-related tasks by regulating the expression of various genes involved in neurogenesis, depression and epilepsy. Implicated in behavioral responses related to morphine reward and spatial memory. In terms of biological role, exhibits lower transactivation activity than isoform 1 in vitro. The heterodimer with JUN does not display any transcriptional activity, and may thereby act as an transcriptional inhibitor. May be involved in the regulation of neurogenesis in the hippocampus. May play a role in synaptic modifications in nucleus accumbens medium spiny neurons and thereby play a role in adaptive and pathological reward-dependent learning, including maladaptive responses involved in drug addiction. Seems to be more stably expressed with a half-life of ~9.5 hours in cell culture as compared to 1.5 hours half-life of isoform 1. This Homo sapiens (Human) protein is Protein FosB (FOSB).